The primary structure comprises 141 residues: Large ribosomal subunit protein uL11 (141 aa).

This sequence belongs to the universal ribosomal protein uL11 family. Part of the ribosomal stalk of the 50S ribosomal subunit. Interacts with L10 and the large rRNA to form the base of the stalk. L10 forms an elongated spine to which L12 dimers bind in a sequential fashion forming a multimeric L10(L12)X complex. In terms of processing, one or more lysine residues are methylated.

Forms part of the ribosomal stalk which helps the ribosome interact with GTP-bound translation factors. In Chlorobaculum parvum (strain DSM 263 / NCIMB 8327) (Chlorobium vibrioforme subsp. thiosulfatophilum), this protein is Large ribosomal subunit protein uL11.